The chain runs to 136 residues: Peptide methionine sulfoxide reductase B5 (136 aa).

Residues 14 to 135 (DEEWRAVLSP…NSVSIKFTPA (122 aa)) enclose the MsrB domain. Positions 53, 56, 99, and 102 each coordinate Zn(2+). The cysteines at positions 71 and 124 are disulfide-linked. Cys124 functions as the Nucleophile in the catalytic mechanism.

It belongs to the MsrB Met sulfoxide reductase family. Requires Zn(2+) as cofactor.

Its subcellular location is the cytoplasm. It localises to the cytosol. It carries out the reaction L-methionyl-[protein] + [thioredoxin]-disulfide + H2O = L-methionyl-(R)-S-oxide-[protein] + [thioredoxin]-dithiol. Its function is as follows. Catalyzes the reduction of methionine sulfoxide (MetSO) to methionine in proteins. Plays a protective role against oxidative stress by restoring activity to proteins that have been inactivated by methionine oxidation. MSRB family specifically reduces the MetSO R-enantiomer. The polypeptide is Peptide methionine sulfoxide reductase B5 (MSRB5) (Oryza sativa subsp. japonica (Rice)).